A 194-amino-acid chain; its full sequence is Factor in the germline alpha (194 aa).

Positions 59 to 111 (ERRRVANAKERERIKNLNRGFAKLKALVPFLPQSRKPSKVDILKGATEYIQIL) constitute a bHLH domain. A compositionally biased stretch (basic and acidic residues) spans 121-137 (SEKQSPEEQTHSGRPSD). The disordered stretch occupies residues 121–163 (SEKQSPEEQTHSGRPSDPHVSSTRELLGNATQPTSCASGLKKE). Over residues 139 to 157 (HVSSTRELLGNATQPTSCA) the composition is skewed to polar residues.

As to quaternary structure, heterodimer with TCF3/isoform E12. As to expression, expressed only in the oocytes within the ovary and at lower level in the testis. Found in the resting oocytes of the primordial follicle cells, at the periphery of the ovary and in the hilar region. Also detected in growing oocytes, but at lower levels.

It localises to the nucleus. Germ-line specific transcription factor implicated in postnatal oocyte-specific gene expression. Plays a key regulatory role in the expression of multiple oocyte-specific genes, including those that initiate folliculogenesis and those that encode the zona pellucida (ZP1, ZP2 and ZP3) required for fertilization and early embryonic survival. Essential for oocytes to survive and form primordial follicles. The persistence of FIGLA in adult females suggests that it may regulate additional pathways that are essential for normal ovarian development. Binds to the E-box (5'-CANNTG-3') of the ZPs (ZP1, ZP2, ZP3) promoters. The protein is Factor in the germline alpha (Figla) of Mus musculus (Mouse).